A 56-amino-acid chain; its full sequence is Large ribosomal subunit protein bL33 (56 aa).

The protein belongs to the bacterial ribosomal protein bL33 family.

In Haemophilus influenzae (strain 86-028NP), this protein is Large ribosomal subunit protein bL33.